The sequence spans 199 residues: Shikimate kinase (199 aa).

Residue 14-19 (GSGKST) coordinates ATP. Ser18 provides a ligand contact to Mg(2+). Substrate is bound by residues Asp36, Arg60, and Gly82. Position 120 (Arg120) interacts with ATP. Arg147 lines the substrate pocket.

This sequence belongs to the shikimate kinase family. In terms of assembly, monomer. Requires Mg(2+) as cofactor.

The protein localises to the cytoplasm. It carries out the reaction shikimate + ATP = 3-phosphoshikimate + ADP + H(+). It participates in metabolic intermediate biosynthesis; chorismate biosynthesis; chorismate from D-erythrose 4-phosphate and phosphoenolpyruvate: step 5/7. Functionally, catalyzes the specific phosphorylation of the 3-hydroxyl group of shikimic acid using ATP as a cosubstrate. This chain is Shikimate kinase, found in Chlorobium limicola (strain DSM 245 / NBRC 103803 / 6330).